The following is a 119-amino-acid chain: Small ribosomal subunit protein uS13m (119 aa).

It belongs to the universal ribosomal protein uS13 family. Part of the small ribosomal subunit.

Its subcellular location is the mitochondrion. Its function is as follows. Located at the top of the head of the small subunit, it contacts several helices of the small subunit rRNA. The sequence is that of Small ribosomal subunit protein uS13m (RPS13) from Acanthamoeba castellanii (Amoeba).